Reading from the N-terminus, the 141-residue chain is Eukaryotic translation initiation factor 1A (141 aa).

A compositionally biased stretch (basic residues) spans 1-15; the sequence is MPKNKGKGGKNRRRG. A disordered region spans residues 1-28; the sequence is MPKNKGKGGKNRRRGKNENEQKRELQFK. Residues 16-28 show a composition bias toward basic and acidic residues; it reads KNENEQKRELQFK. One can recognise an S1-like domain in the interval 21-95; it reads QKRELQFKEE…DKADVILRYN (75 aa).

This sequence belongs to the eIF-1A family.

Functionally, seems to be required for maximal rate of protein biosynthesis. Enhances ribosome dissociation into subunits and stabilizes the binding of the initiator Met-tRNA(I) to 40 S ribosomal subunits. The polypeptide is Eukaryotic translation initiation factor 1A (eif1a) (Dictyostelium discoideum (Social amoeba)).